Reading from the N-terminus, the 308-residue chain is ADP-L-glycero-D-manno-heptose-6-epimerase (308 aa).

Residues 10–11 (MI), 31–32 (DN), K38, K53, 75–79 (EGACS), and N92 contribute to the NADP(+) site. Y140 (proton acceptor) is an active-site residue. K144 serves as a coordination point for NADP(+). N169 provides a ligand contact to substrate. 2 residues coordinate NADP(+): V170 and K178. K178 acts as the Proton acceptor in catalysis. Substrate-binding positions include S180, H187, 201 to 204 (FEGS), R209, and Y272.

This sequence belongs to the NAD(P)-dependent epimerase/dehydratase family. HldD subfamily. Homopentamer. It depends on NADP(+) as a cofactor.

It carries out the reaction ADP-D-glycero-beta-D-manno-heptose = ADP-L-glycero-beta-D-manno-heptose. Its pathway is nucleotide-sugar biosynthesis; ADP-L-glycero-beta-D-manno-heptose biosynthesis; ADP-L-glycero-beta-D-manno-heptose from D-glycero-beta-D-manno-heptose 7-phosphate: step 4/4. In terms of biological role, catalyzes the interconversion between ADP-D-glycero-beta-D-manno-heptose and ADP-L-glycero-beta-D-manno-heptose via an epimerization at carbon 6 of the heptose. The protein is ADP-L-glycero-D-manno-heptose-6-epimerase of Actinobacillus pleuropneumoniae serotype 5b (strain L20).